The chain runs to 492 residues: Spindle assembly abnormal protein 6 (492 aa).

Positions 46–98 (SGEKELKFEISRSDDFEFLFSETLNNEKYQILARDHDLTVDFDAFPKVIIQHL) constitute a PISA domain. Residues 192-407 (KSADELASLR…KIAHYRAQRF (216 aa)) are a coiled coil.

As to quaternary structure, nine homodimers form a cartwheel structure with an internal diameter of 23 nM and radial spokes connecting to the microtubule triplets. Interacts with sas-5.

The protein resides in the cytoplasm. Its subcellular location is the cytoskeleton. It localises to the microtubule organizing center. It is found in the centrosome. The protein localises to the centriole. Central scaffolding component of the centrioles ensuring their 9-fold symmetry. Required for centrosome biogenesis and duplication. This Caenorhabditis elegans protein is Spindle assembly abnormal protein 6.